The chain runs to 813 residues: MGPSGTAHRMRAPLSWLLLLLLSLQVAVPAGALAETLLDAPGARGASSNPPSPASVVAPGTTPFEESRLPVFTLDYPHVQIPFEITLWILLASLAKIGFHLYHKLPTIVPESCLLIMVGLLLGGIIFGVDEKSPPAMKTDVFFLYLLPPIVLDAGYFMPTRPFFENLGTIFWYAVVGTLWNSIGIGLSLFGICQIEAFGLSDITLLQNLLFGSLISAVDPVAVLAVFENIHVNEQLYILVFGESLLNDAVTVVLYNLFKSFCQMKTIQTVDVFAGIANFFVVGIGGVLIGILLGFIAAFTTRFTHNIRVIEPLFVFLYSYLSYITAEMFHLSGIMAITACAMTMNKYVEENVSQKSYTTIKYFMKMLSSVSETLIFIFMGVSTVGKNHEWNWAFVCFTLAFCLIWRALGVFVLTQVINWFRTIPLTFKDQFIIAYGGLRGAICFALVFLLPATVFPRKKLFITAAIVVIFFTVFILGITIRPLVEFLDVKRSNKKQQAVSEEIHCRFFDHVKTGIEDVCGHWGHNFWRDKFKKFDDKYLRKLLIRENQPKSSIVSLYKKLEIKHAIEMAETGMISTVPSFASLNDCREEKIRKLTPGEMDEIREILSRNLYQIRQRTLSYNRHNLTADTSERQAKEILIRRRHSLRESLRKDNSLNRERRASTSTSRYLSLPKNTKLPEKLQKKNKVSNADGNSSDSDMDGTTVLNLQPRARRFLPDQFSKKASPAYKMEWKNEVDVGSARAPPSVTPAPRSKEGGTQTPGVLRQPLLSKDQRFGRGREDSLTEDVPPKPPPRLVRRASEPGNRKGRLGNEKP.

The next 7 helical transmembrane spans lie at 108–128, 139–159, 170–190, 210–230, 238–258, 279–299, and 309–329; these read IVPE…IIFG, TDVF…YFMP, IFWY…LSLF, LFGS…FENI, ILVF…YNLF, FFVV…IAAF, and VIEP…AEMF. Asn-351 carries N-linked (GlcNAc...) asparagine glycosylation. 4 helical membrane-spanning segments follow: residues 362 to 382, 393 to 413, 431 to 451, and 460 to 480; these read YFMK…MGVS, AFVC…VFVL, FIIA…FLLP, and LFIT…GITI. The span at 649–661 shows a compositional bias: basic and acidic residues; it reads LRKDNSLNRERRA. Disordered stretches follow at residues 649–709 and 736–813; these read LRKD…NLQP and DVGS…NEKP. Positions 687-696 are enriched in polar residues; sequence VSNADGNSSD. Composition is skewed to basic and acidic residues over residues 770–781 and 797–813; these read KDQRFGRGREDS and RASE…NEKP.

The protein belongs to the monovalent cation:proton antiporter 1 (CPA1) transporter (TC 2.A.36) family. As to quaternary structure, interacts with CHP1 and CHP2. As to expression, predominantly in small intestine, colon, and stomach, with much lower levels in skeletal muscle, kidney, brain, testis, uterus, heart and lung.

The protein resides in the apical cell membrane. It catalyses the reaction Na(+)(in) + H(+)(out) = Na(+)(out) + H(+)(in). Its activity is regulated as follows. Li(+) activates Na(+)/H(+) exchanger. Functionally, plasma membrane Na(+)/H(+) antiporter. Mediates the electroneutral exchange of intracellular H(+) ions for extracellular Na(+). Major apical Na(+)/H(+) exchanger in the base of the colonic crypt. Controls in the colonic crypt intracellular pH (pHi) to direct colonic epithelial cell differentiation into the absorptive enterocyte lineage at the expense of the secretory lineage. The chain is Sodium/hydrogen exchanger 2 (Slc9a2) from Rattus norvegicus (Rat).